The following is a 304-amino-acid chain: tRNA pseudouridine synthase B (304 aa).

The active-site Nucleophile is Asp38.

The protein belongs to the pseudouridine synthase TruB family. Type 1 subfamily.

The enzyme catalyses uridine(55) in tRNA = pseudouridine(55) in tRNA. Responsible for synthesis of pseudouridine from uracil-55 in the psi GC loop of transfer RNAs. This Listeria innocua serovar 6a (strain ATCC BAA-680 / CLIP 11262) protein is tRNA pseudouridine synthase B.